The following is a 596-amino-acid chain: Aspartate--tRNA(Asp/Asn) ligase (596 aa).

Glutamate 175 provides a ligand contact to L-aspartate. Residues 199–202 (QMFK) form an aspartate region. L-aspartate contacts are provided by arginine 221 and histidine 451. 221–223 (RDE) contributes to the ATP binding site. Position 485 (glutamate 485) interacts with ATP. Arginine 492 lines the L-aspartate pocket. Position 537–540 (537–540 (GVDR)) interacts with ATP.

Belongs to the class-II aminoacyl-tRNA synthetase family. Type 1 subfamily. As to quaternary structure, homodimer.

Its subcellular location is the cytoplasm. The catalysed reaction is tRNA(Asx) + L-aspartate + ATP = L-aspartyl-tRNA(Asx) + AMP + diphosphate. Functionally, aspartyl-tRNA synthetase with relaxed tRNA specificity since it is able to aspartylate not only its cognate tRNA(Asp) but also tRNA(Asn). Reaction proceeds in two steps: L-aspartate is first activated by ATP to form Asp-AMP and then transferred to the acceptor end of tRNA(Asp/Asn). In Zymomonas mobilis subsp. mobilis (strain ATCC 31821 / ZM4 / CP4), this protein is Aspartate--tRNA(Asp/Asn) ligase.